We begin with the raw amino-acid sequence, 400 residues long: Acetate kinase (400 aa).

N7 lines the Mg(2+) pocket. ATP is bound at residue K14. A substrate-binding site is contributed by R91. D148 (proton donor/acceptor) is an active-site residue. ATP contacts are provided by residues 208-212, 283-285, and 331-335; these read HVGNG, DMR, and GVGEN. Residue E385 participates in Mg(2+) binding.

This sequence belongs to the acetokinase family. In terms of assembly, homodimer. The cofactor is Mg(2+). It depends on Mn(2+) as a cofactor.

It is found in the cytoplasm. It catalyses the reaction acetate + ATP = acetyl phosphate + ADP. Its pathway is metabolic intermediate biosynthesis; acetyl-CoA biosynthesis; acetyl-CoA from acetate: step 1/2. In terms of biological role, catalyzes the formation of acetyl phosphate from acetate and ATP. Can also catalyze the reverse reaction. The sequence is that of Acetate kinase from Parabacteroides distasonis (strain ATCC 8503 / DSM 20701 / CIP 104284 / JCM 5825 / NCTC 11152).